The sequence spans 357 residues: Protein pelota homolog (357 aa).

The protein belongs to the eukaryotic release factor 1 family. Pelota subfamily. Monomer. The cofactor is a divalent metal cation.

The protein resides in the cytoplasm. Functionally, may function in recognizing stalled ribosomes, interact with stem-loop structures in stalled mRNA molecules, and effect endonucleolytic cleavage of the mRNA. May play a role in the release non-functional ribosomes and degradation of damaged mRNAs. Has endoribonuclease activity. The polypeptide is Protein pelota homolog (Methanocella arvoryzae (strain DSM 22066 / NBRC 105507 / MRE50)).